The primary structure comprises 377 residues: Nitric oxide reductase FlRd-NAD(+) reductase (377 aa).

This sequence belongs to the FAD-dependent oxidoreductase family. The cofactor is FAD.

The protein resides in the cytoplasm. It carries out the reaction 2 reduced [nitric oxide reductase rubredoxin domain] + NAD(+) + H(+) = 2 oxidized [nitric oxide reductase rubredoxin domain] + NADH. It participates in nitrogen metabolism; nitric oxide reduction. In terms of biological role, one of at least two accessory proteins for anaerobic nitric oxide (NO) reductase. Reduces the rubredoxin moiety of NO reductase. The protein is Nitric oxide reductase FlRd-NAD(+) reductase of Salmonella enteritidis PT4 (strain P125109).